A 185-amino-acid chain; its full sequence is Ribosome-recycling factor (185 aa).

This sequence belongs to the RRF family.

The protein resides in the cytoplasm. In terms of biological role, responsible for the release of ribosomes from messenger RNA at the termination of protein biosynthesis. May increase the efficiency of translation by recycling ribosomes from one round of translation to another. In Desulforapulum autotrophicum (strain ATCC 43914 / DSM 3382 / VKM B-1955 / HRM2) (Desulfobacterium autotrophicum), this protein is Ribosome-recycling factor.